The sequence spans 466 residues: Adenosylhomocysteinase (466 aa).

Thr-57, Asp-132, and Glu-192 together coordinate substrate. 193–195 (TTT) provides a ligand contact to NAD(+). Substrate-binding residues include Lys-222 and Asp-226. NAD(+)-binding positions include Asn-227, 256 to 261 (GYGDVG), Glu-279, Asn-314, 335 to 337 (IGH), and Asn-380.

The protein belongs to the adenosylhomocysteinase family. The cofactor is NAD(+).

It is found in the cytoplasm. The enzyme catalyses S-adenosyl-L-homocysteine + H2O = L-homocysteine + adenosine. It functions in the pathway amino-acid biosynthesis; L-homocysteine biosynthesis; L-homocysteine from S-adenosyl-L-homocysteine: step 1/1. In terms of biological role, may play a key role in the regulation of the intracellular concentration of adenosylhomocysteine. In Rhizobium etli (strain CIAT 652), this protein is Adenosylhomocysteinase.